We begin with the raw amino-acid sequence, 305 residues long: Coiled-coil domain-containing protein 69-A (305 aa).

Residue G2 is the site of N-myristoyl glycine attachment. Residues 13 to 38 (LRKKKRQKAHQGGLTSQELNDLNAKT) form a disordered region. Positions 25–38 (GLTSQELNDLNAKT) are enriched in polar residues. Positions 42–281 (NEVLQKIKEY…QREKEQNLYR (240 aa)) form a coiled coil.

The protein belongs to the CCDC69 family.

The protein localises to the cytoplasm. It localises to the cytoskeleton. It is found in the spindle. Its subcellular location is the midbody. Its function is as follows. May act as a scaffold to regulate the recruitment and assembly of spindle midzone components. The sequence is that of Coiled-coil domain-containing protein 69-A (ccdc69-a) from Xenopus laevis (African clawed frog).